The sequence spans 711 residues: DNA topoisomerase 3 (711 aa).

A Toprim domain is found at 2–135 (KSLILAEKPS…IKRLWISSVT (134 aa)). Residues glutamate 8 and aspartate 104 each coordinate Mg(2+). In terms of domain architecture, Topo IA-type catalytic spans 152 to 580 (FQHLYEAALA…EMKAFTQSIV (429 aa)). Residues 186–191 (SLGRVQ) are interaction with DNA. The active-site O-(5'-phospho-DNA)-tyrosine intermediate is tyrosine 305. The disordered stretch occupies residues 672 to 699 (KRFKNKSSGKVSKKEMKKYMNNEDSLEN). Positions 683-692 (SKKEMKKYMN) are enriched in basic and acidic residues.

The protein belongs to the type IA topoisomerase family. Mg(2+) is required as a cofactor.

It catalyses the reaction ATP-independent breakage of single-stranded DNA, followed by passage and rejoining.. Functionally, releases the supercoiling and torsional tension of DNA, which is introduced during the DNA replication and transcription, by transiently cleaving and rejoining one strand of the DNA duplex. Introduces a single-strand break via transesterification at a target site in duplex DNA. The scissile phosphodiester is attacked by the catalytic tyrosine of the enzyme, resulting in the formation of a DNA-(5'-phosphotyrosyl)-enzyme intermediate and the expulsion of a 3'-OH DNA strand. The free DNA strand then undergoes passage around the unbroken strand, thus removing DNA supercoils. Finally, in the religation step, the DNA 3'-OH attacks the covalent intermediate to expel the active-site tyrosine and restore the DNA phosphodiester backbone. The chain is DNA topoisomerase 3 from Staphylococcus haemolyticus (strain JCSC1435).